We begin with the raw amino-acid sequence, 121 residues long: Small ribosomal subunit protein uS13 (121 aa).

The interval 91–121 (HRRGLPVRGQNSKNNARTRKGPRRTVANKKK) is disordered. Basic residues predominate over residues 106-121 (ARTRKGPRRTVANKKK).

It belongs to the universal ribosomal protein uS13 family. Part of the 30S ribosomal subunit. Forms a loose heterodimer with protein S19. Forms two bridges to the 50S subunit in the 70S ribosome.

Functionally, located at the top of the head of the 30S subunit, it contacts several helices of the 16S rRNA. In the 70S ribosome it contacts the 23S rRNA (bridge B1a) and protein L5 of the 50S subunit (bridge B1b), connecting the 2 subunits; these bridges are implicated in subunit movement. Contacts the tRNAs in the A and P-sites. In Bacillus cereus (strain G9842), this protein is Small ribosomal subunit protein uS13.